Reading from the N-terminus, the 302-residue chain is Probable 2-(5''-triphosphoribosyl)-3'-dephosphocoenzyme-A synthase (302 aa).

It belongs to the CitG/MdcB family.

It catalyses the reaction 3'-dephospho-CoA + ATP = 2'-(5''-triphospho-alpha-D-ribosyl)-3'-dephospho-CoA + adenine. The chain is Probable 2-(5''-triphosphoribosyl)-3'-dephosphocoenzyme-A synthase from Albidiferax ferrireducens (strain ATCC BAA-621 / DSM 15236 / T118) (Rhodoferax ferrireducens).